We begin with the raw amino-acid sequence, 117 residues long: Immunoglobulin lambda variable 1-51 (117 aa).

The signal sequence occupies residues 1–19; the sequence is MTCSPLLLTLLIHCTGSWA. Residue Gln20 is modified to Pyrrolidone carboxylic acid. The framework-1 stretch occupies residues 20–44; that stretch reads QSVLTQPPSVSAAPGQKVTISCSGS. Residues 20–117 enclose the Ig-like domain; sequence QSVLTQPPSV…CGTWDSSLSA (98 aa). A disulfide bond links Cys41 and Cys108. Positions 45-52 are complementarity-determining-1; that stretch reads SSNIGNNY. Residues 53 to 69 form a framework-2 region; that stretch reads VSWYQQLPGTAPKLLIY. The interval 70–72 is complementarity-determining-2; the sequence is DNN. The framework-3 stretch occupies residues 73–108; the sequence is KRPSGIPDRFSGSKSGTSATLGITGLQTGDEADYYC. The tract at residues 109–117 is complementarity-determining-3; it reads GTWDSSLSA.

In terms of assembly, immunoglobulins are composed of two identical heavy chains and two identical light chains; disulfide-linked.

It localises to the secreted. The protein resides in the cell membrane. V region of the variable domain of immunoglobulin light chains that participates in the antigen recognition. Immunoglobulins, also known as antibodies, are membrane-bound or secreted glycoproteins produced by B lymphocytes. In the recognition phase of humoral immunity, the membrane-bound immunoglobulins serve as receptors which, upon binding of a specific antigen, trigger the clonal expansion and differentiation of B lymphocytes into immunoglobulins-secreting plasma cells. Secreted immunoglobulins mediate the effector phase of humoral immunity, which results in the elimination of bound antigens. The antigen binding site is formed by the variable domain of one heavy chain, together with that of its associated light chain. Thus, each immunoglobulin has two antigen binding sites with remarkable affinity for a particular antigen. The variable domains are assembled by a process called V-(D)-J rearrangement and can then be subjected to somatic hypermutations which, after exposure to antigen and selection, allow affinity maturation for a particular antigen. The chain is Immunoglobulin lambda variable 1-51 from Homo sapiens (Human).